The primary structure comprises 103 residues: Cyclotide vitri-A (103 aa).

Positions 1–9 (AAFALPAFA) are cleaved as a signal peptide. Positions 10–69 (SFEKDVITPAALEAVLNRKAPLSNIMMENDAIVNVIANVKTVISNPVLEEALLKTNHGVN) are excised as a propeptide. A cross-link (cyclopeptide (Gly-Asn)) is located at residues 70–99 (GIPCGESCVWIPCITSAIGCSCKSKVCYRN). Cystine bridges form between cysteine 73–cysteine 89, cysteine 77–cysteine 91, and cysteine 82–cysteine 96. Residues 100–103 (SLDN) constitute a propeptide that is removed on maturation.

Post-translationally, this is a cyclic peptide.

Its function is as follows. Probably participates in a plant defense mechanism. The chain is Cyclotide vitri-A from Viola biflora (Yellow wood violet).